Reading from the N-terminus, the 221-residue chain is Uracil-DNA glycosylase (221 aa).

D65 acts as the Proton acceptor in catalysis.

This sequence belongs to the uracil-DNA glycosylase (UDG) superfamily. UNG family.

It is found in the cytoplasm. It carries out the reaction Hydrolyzes single-stranded DNA or mismatched double-stranded DNA and polynucleotides, releasing free uracil.. Excises uracil residues from the DNA which can arise as a result of misincorporation of dUMP residues by DNA polymerase or due to deamination of cytosine. This Flavobacterium johnsoniae (strain ATCC 17061 / DSM 2064 / JCM 8514 / BCRC 14874 / CCUG 350202 / NBRC 14942 / NCIMB 11054 / UW101) (Cytophaga johnsonae) protein is Uracil-DNA glycosylase.